The sequence spans 274 residues: 2,3,4,5-tetrahydropyridine-2,6-dicarboxylate N-succinyltransferase (274 aa).

Substrate contacts are provided by Arg104 and Asp141.

This sequence belongs to the transferase hexapeptide repeat family. In terms of assembly, homotrimer.

It is found in the cytoplasm. The enzyme catalyses (S)-2,3,4,5-tetrahydrodipicolinate + succinyl-CoA + H2O = (S)-2-succinylamino-6-oxoheptanedioate + CoA. It participates in amino-acid biosynthesis; L-lysine biosynthesis via DAP pathway; LL-2,6-diaminopimelate from (S)-tetrahydrodipicolinate (succinylase route): step 1/3. In Escherichia coli O139:H28 (strain E24377A / ETEC), this protein is 2,3,4,5-tetrahydropyridine-2,6-dicarboxylate N-succinyltransferase.